Here is a 2544-residue protein sequence, read N- to C-terminus: Highly reducing polyketide synthase pkhB (2544 aa).

Residues 9–438 form the Ketosynthase family 3 (KS3) domain; the sequence is SEPIAIIGMS…GTNAHVILES (430 aa). Catalysis depends on for beta-ketoacyl synthase activity residues C182, H317, and H358. Residues 566–876 form a malonyl-CoA:ACP transacylase (MAT) domain region; the sequence is VFTGQVFRRS…PYWGCLVRDE (311 aa). The segment at 948-1082 is N-terminal hotdog fold; sequence HELLGMPVAG…GMVGIEESAV (135 aa). A dehydratase (DH) domain region spans residues 948-1252; sequence HELLGMPVAG…VELAALGRGS (305 aa). The region spanning 948 to 1254 is the PKS/mFAS DH domain; that stretch reads HELLGMPVAG…LAALGRGSSA (307 aa). H980 (proton acceptor; for dehydratase activity) is an active-site residue. A C-terminal hotdog fold region spans residues 1095–1254; that stretch reads YTRQPNPQDL…LAALGRGSSA (160 aa). D1165 serves as the catalytic Proton donor; for dehydratase activity. The methyltransferase (CMet) domain stretch occupies residues 1398-1573; it reads SSLRQLSALL…FSGLDLEIYD (176 aa). Residues 1826-2142 form an enoyl reductase (ER) domain region; it reads GHLGTLAFAE…TGDQMGKVVL (317 aa). The tract at residues 2169–2356 is ketoreductase (KR) domain; it reads ASYLIVGGVG…GVAIDLGPIS (188 aa). Residues 2462 to 2539 form the Carrier domain; that stretch reads EGARLIGAAI…ALAGLVAEKS (78 aa). Position 2499 is an O-(pantetheine 4'-phosphoryl)serine (S2499).

Requires pantetheine 4'-phosphate as cofactor.

It participates in secondary metabolite biosynthesis. In terms of biological role, highly reducing polyketide synthase; part of the pkh gene cluster that mediates the biosynthesis of 2,4-dihydroxy-6-[(3E,5E,7E)-2-oxonona-3,5,7-trienyl]benzaldehyde. The highly reducing polyketide synthase pkhB first produces the (2E,4E,6E)-octa-2,4,6-trienyl strater unit for the non-reducing polyketide synthase pkhA. This octatrienoyl starter is then loaded onto the SAT domain of the NR-PKS pkhA to be condensed with 4 malonyl-CoA units to yield 2,4-dihydroxy-6-[(3E,5E,7E)-2-oxonona-3,5,7-trienyl]benzaldehyde. This chain is Highly reducing polyketide synthase pkhB, found in Emericella nidulans (strain FGSC A4 / ATCC 38163 / CBS 112.46 / NRRL 194 / M139) (Aspergillus nidulans).